Here is a 359-residue protein sequence, read N- to C-terminus: tRNA-specific 2-thiouridylase MnmA (359 aa).

ATP contacts are provided by residues Gly-9 to Ser-16 and Met-35. Catalysis depends on Cys-104, which acts as the Nucleophile. Cys-104 and Cys-200 are oxidised to a cystine. An ATP-binding site is contributed by Gly-128. Positions Lys-150 to Gln-152 are interaction with tRNA. Cys-200 acts as the Cysteine persulfide intermediate in catalysis. The tract at residues Arg-306–Tyr-307 is interaction with tRNA.

The protein belongs to the MnmA/TRMU family.

It localises to the cytoplasm. The catalysed reaction is S-sulfanyl-L-cysteinyl-[protein] + uridine(34) in tRNA + AH2 + ATP = 2-thiouridine(34) in tRNA + L-cysteinyl-[protein] + A + AMP + diphosphate + H(+). Functionally, catalyzes the 2-thiolation of uridine at the wobble position (U34) of tRNA, leading to the formation of s(2)U34. The sequence is that of tRNA-specific 2-thiouridylase MnmA from Clostridium perfringens (strain ATCC 13124 / DSM 756 / JCM 1290 / NCIMB 6125 / NCTC 8237 / Type A).